We begin with the raw amino-acid sequence, 466 residues long: GTP cyclohydrolase 1 (466 aa).

Positions 342, 345, and 416 each coordinate Zn(2+).

This sequence belongs to the GTP cyclohydrolase I family. As to quaternary structure, homodimer.

It carries out the reaction GTP + H2O = 7,8-dihydroneopterin 3'-triphosphate + formate + H(+). It participates in cofactor biosynthesis; 7,8-dihydroneopterin triphosphate biosynthesis; 7,8-dihydroneopterin triphosphate from GTP: step 1/1. Its function is as follows. GTP cyclohydrolase 1 is the first enzyme in the biosynthetic pathway leading to folic acid. The sequence is that of GTP cyclohydrolase 1 (GCH1) from Arabidopsis thaliana (Mouse-ear cress).